We begin with the raw amino-acid sequence, 254 residues long: uncharacterized protein (254 aa).

The segment at 163 to 182 is disordered; it reads PNKHTQHKRSTRRTSPKDYN. Residues 166 to 176 show a composition bias toward basic residues; the sequence is HTQHKRSTRRT. The chain crosses the membrane as a helical span at residues 207–227; the sequence is AHSAWILIIIIIIIVVILFFF.

It belongs to the RL11 family.

The protein resides in the host membrane. This is an uncharacterized protein from Human cytomegalovirus (strain Merlin) (HHV-5).